A 100-amino-acid polypeptide reads, in one-letter code: Small ribosomal subunit protein uS14c (100 aa).

The protein belongs to the universal ribosomal protein uS14 family. Part of the 30S ribosomal subunit.

It localises to the plastid. The protein localises to the chloroplast. In terms of biological role, binds 16S rRNA, required for the assembly of 30S particles. The protein is Small ribosomal subunit protein uS14c of Cicer arietinum (Chickpea).